A 216-amino-acid polypeptide reads, in one-letter code: NKG2-D type II integral membrane protein (216 aa).

The Cytoplasmic portion of the chain corresponds to 1–51; that stretch reads MGWIRGRRSRHSWEMSEFHNYNLDLKKSDFSTRWQKQRCPVVKSKCRENAS. A helical; Signal-anchor for type II membrane protein membrane pass occupies residues 52–72; that stretch reads PFFFCCFIAVAMGIRFIIMVT. Topologically, residues 73-216 are extracellular; it reads IWSAVFLNSL…NTYICMQRTV (144 aa). 2 disulfides stabilise this stretch: Cys-96-Cys-105 and Cys-99-Cys-110. The region spanning 98–213 is the C-type lectin domain; sequence PCPKNWICYK…STPNTYICMQ (116 aa). N-linked (GlcNAc...) asparagine glycans are attached at residues Asn-115, Asn-131, Asn-163, and Asn-202. Intrachain disulfides connect Cys-127/Cys-211 and Cys-189/Cys-203.

Homodimer; disulfide-linked. Heterohexamer composed of two subunits of KLRK1 and four subunits of HCST/DAP10. Interacts (via transmembrane domain) with HCST/DAP10 (via transmembrane domain); the interaction is required for KLRK1 NK cell surface and induces NK cell-mediated cytotoxicity. Can form disulfide-bonded heterodimer with CD94. Interacts with CEACAM1; recruits PTPN6 that dephosphorylates VAV1. Natural killer cells.

The protein resides in the cell membrane. In terms of biological role, functions as an activating and costimulatory receptor involved in immunosurveillance upon binding to various cellular stress-inducible ligands displayed at the surface of autologous tumor cells and virus-infected cells. Provides both stimulatory and costimulatory innate immune responses on activated killer (NK) cells, leading to cytotoxic activity. Acts as a costimulatory receptor for T-cell receptor (TCR) in CD8(+) T-cell-mediated adaptive immune responses by amplifying T-cell activation. Stimulates perforin-mediated elimination of ligand-expressing tumor cells. Signaling involves calcium influx, culminating in the expression of TNF-alpha. Participates in NK cell-mediated bone marrow graft rejection. May play a regulatory role in differentiation and survival of NK cells. Binds to ligands belonging to various subfamilies of MHC class I-related glycoproteins. The protein is NKG2-D type II integral membrane protein (KLRK1) of Pan troglodytes (Chimpanzee).